A 117-amino-acid polypeptide reads, in one-letter code: uncharacterized protein (117 aa).

The next 4 helical transmembrane spans lie at 3–23, 40–60, 66–86, and 94–114; these read AVPI…NILL, FLTP…LLFA, LEVS…LIIA, and PFHL…IFLA.

This sequence to E.coli and S.aureus ethidium bromide resistance proteins (ebr/QacC/EmrE/MvrC).

It localises to the cell membrane. This is an uncharacterized protein from Sinorhizobium fredii (strain NBRC 101917 / NGR234).